A 349-amino-acid polypeptide reads, in one-letter code: Anthranilate phosphoribosyltransferase (349 aa).

Residues G82, 85 to 86 (GD), 92 to 95 (NVST), 110 to 118 (KHGNRGVSS), and S122 contribute to the 5-phospho-alpha-D-ribose 1-diphosphate site. Residue G82 participates in anthranilate binding. Residue S94 coordinates Mg(2+). Residue N113 participates in anthranilate binding. An anthranilate-binding site is contributed by R168. 2 residues coordinate Mg(2+): D227 and E228.

This sequence belongs to the anthranilate phosphoribosyltransferase family. Homodimer. It depends on Mg(2+) as a cofactor.

The enzyme catalyses N-(5-phospho-beta-D-ribosyl)anthranilate + diphosphate = 5-phospho-alpha-D-ribose 1-diphosphate + anthranilate. Its pathway is amino-acid biosynthesis; L-tryptophan biosynthesis; L-tryptophan from chorismate: step 2/5. Functionally, catalyzes the transfer of the phosphoribosyl group of 5-phosphorylribose-1-pyrophosphate (PRPP) to anthranilate to yield N-(5'-phosphoribosyl)-anthranilate (PRA). In Acinetobacter baumannii (strain SDF), this protein is Anthranilate phosphoribosyltransferase.